Reading from the N-terminus, the 240-residue chain is tRNA (guanine-N(1)-)-methyltransferase (240 aa).

Residues Gly111 and 130–135 (IGDYVI) contribute to the S-adenosyl-L-methionine site.

It belongs to the RNA methyltransferase TrmD family. In terms of assembly, homodimer.

The protein localises to the cytoplasm. The catalysed reaction is guanosine(37) in tRNA + S-adenosyl-L-methionine = N(1)-methylguanosine(37) in tRNA + S-adenosyl-L-homocysteine + H(+). Its function is as follows. Specifically methylates guanosine-37 in various tRNAs. In Mycoplasma mycoides subsp. mycoides SC (strain CCUG 32753 / NCTC 10114 / PG1), this protein is tRNA (guanine-N(1)-)-methyltransferase.